A 396-amino-acid chain; its full sequence is L-lactate dehydrogenase (396 aa).

The FMN hydroxy acid dehydrogenase domain occupies Met1–Gly380. Tyr24 serves as a coordination point for substrate. Residues Ser106 and Gln127 each coordinate FMN. Substrate is bound at residue Tyr129. FMN is bound at residue Thr155. Substrate is bound at residue Arg164. Lys251 contacts FMN. His275 (proton acceptor) is an active-site residue. Arg278 contributes to the substrate binding site. Residue Asp306–Arg330 participates in FMN binding.

Belongs to the FMN-dependent alpha-hydroxy acid dehydrogenase family. The cofactor is FMN.

Its subcellular location is the cell inner membrane. The enzyme catalyses (S)-lactate + A = pyruvate + AH2. Its function is as follows. Catalyzes the conversion of L-lactate to pyruvate. Is coupled to the respiratory chain. This is L-lactate dehydrogenase from Salmonella newport (strain SL254).